A 569-amino-acid chain; its full sequence is MTSENNPLRHTALFPSTTAVERWAIPGLILAFVMFYLLPLMSHGLWIPDETRYGQISQEMLLSGNWVAPHFMGIRYFEKPIAGYWMIAIGQAIFGDNLFGVRIASALSTGVSVWLTYLLARRLWNNPRINAASALLYMSFGLIAGQAGYANLDPQFTLWVNLSMVAVWFAIDNRTPRARLGGWALLGVACGMGLMTKGFLALLLPVLIALPYMLWQRRFGELVRYGLVAVVVCALVSLPWVLAVHYREPDFWRFFFWHEHIRRFAAGDDAQHARPWWFYLPLLFASTLPWALLLPSTLLRMWREKREAKMAYLALWFLLPLAFFSLSSGKLPTYIMPCLLPVALLMGQTVVKWLDQRSGRFLRLNGVFNTVLASVALVALLYLQATKEIYENTEMFSLSLAYIVVVGWIIANALQVLRPLTLWAMPALGIGLLVALLPAAMPAQIVNSKMPDQFIAEHQRELSETASLLSNDLGAASALAWRLKRPQVDLFNTIGELKYGLEDPAMEARKVTMDGVGQWMTEARKKGAVGVVLRVNSTQEEQEVELLPVDGKHYRRGNLHIFIFAQKQP.

The next 12 membrane-spanning stretches (helical) occupy residues 27 to 47 (GLIL…GLWI), 98 to 120 (LFGV…YLLA), 129 to 149 (INAA…QAGY), 151 to 171 (NLDP…WFAI), 194 to 214 (LMTK…PYML), 225 to 245 (YGLV…LAVH), 275 to 295 (PWWF…LLLP), 311 to 331 (AYLA…SGKL), 334 to 354 (YIMP…VKWL), 366 to 386 (GVFN…LQAT), 396 to 416 (FSLS…ALQV), and 420 to 440 (LTLW…LPAA).

It belongs to the glycosyltransferase 83 family.

Its subcellular location is the cell inner membrane. It catalyses the reaction 4-amino-4-deoxy-alpha-L-arabinopyranosyl di-trans,octa-cis-undecaprenyl phosphate + lipid IVA = lipid IIA + di-trans,octa-cis-undecaprenyl phosphate.. The protein operates within lipopolysaccharide metabolism; 4-amino-4-deoxy-beta-L-arabinose-lipid A biosynthesis. Its function is as follows. Catalyzes the transfer of the L-Ara4N moiety of the glycolipid undecaprenyl phosphate-alpha-L-Ara4N to lipid A. The modified arabinose is attached to lipid A and is required for resistance to polymyxin and cationic antimicrobial peptides. This Pseudomonas fluorescens (strain Pf0-1) protein is Undecaprenyl phosphate-alpha-4-amino-4-deoxy-L-arabinose arabinosyl transferase 1.